A 360-amino-acid chain; its full sequence is NAD(P)H-quinone oxidoreductase subunit 1, chloroplastic (360 aa).

A run of 9 helical transmembrane segments spans residues 27 to 47, 98 to 118, 129 to 149, 165 to 185, 203 to 223, 248 to 268, 269 to 289, 297 to 317, and 340 to 360; these read IWIFVPIFSLVLGIITGVLVI, FSIGPSIAVISILLSYSVIPF, IGIFLWIAISSIAPIGLLMSG, AAQSISYEIPLTLCVLSISLL, FWGWNLWRQPIGFIIFLISSL, YSGIKFGLFYVASYLNLLISS, LFVTVLYLGGWNISIPYISIL, IFGTTIGIFITLAKTYLFLFI, and FLLPISLGNLLLTTSFQLFSL.

It belongs to the complex I subunit 1 family. In terms of assembly, NDH is composed of at least 16 different subunits, 5 of which are encoded in the nucleus.

The protein resides in the plastid. The protein localises to the chloroplast thylakoid membrane. The catalysed reaction is a plastoquinone + NADH + (n+1) H(+)(in) = a plastoquinol + NAD(+) + n H(+)(out). It carries out the reaction a plastoquinone + NADPH + (n+1) H(+)(in) = a plastoquinol + NADP(+) + n H(+)(out). In terms of biological role, NDH shuttles electrons from NAD(P)H:plastoquinone, via FMN and iron-sulfur (Fe-S) centers, to quinones in the photosynthetic chain and possibly in a chloroplast respiratory chain. The immediate electron acceptor for the enzyme in this species is believed to be plastoquinone. Couples the redox reaction to proton translocation, and thus conserves the redox energy in a proton gradient. The sequence is that of NAD(P)H-quinone oxidoreductase subunit 1, chloroplastic from Lepidium virginicum (Virginia pepperweed).